Consider the following 177-residue polypeptide: Ribosome rescue factor SmrB (177 aa).

Residues 98 to 173 (LDMHGMKQDE…GAGAILVLLS (76 aa)) form the Smr domain.

The protein belongs to the SmrB family. In terms of assembly, associates with collided ribosomes, but not with correctly translating polysomes.

In terms of biological role, acts as a ribosome collision sensor. Detects stalled/collided disomes (pairs of ribosomes where the leading ribosome is stalled and a second ribosome has collided with it) and endonucleolytically cleaves mRNA at the 5' boundary of the stalled ribosome. Stalled/collided disomes form a new interface (primarily via the 30S subunits) that binds SmrB. Cleaved mRNA becomes available for tmRNA ligation, leading to ribosomal subunit dissociation and rescue of stalled ribosomes. This Aliivibrio fischeri (strain ATCC 700601 / ES114) (Vibrio fischeri) protein is Ribosome rescue factor SmrB.